Here is a 239-residue protein sequence, read N- to C-terminus: tRNA (guanine-N(7)-)-methyltransferase (239 aa).

4 residues coordinate S-adenosyl-L-methionine: glutamate 69, glutamate 94, aspartate 121, and aspartate 144. Aspartate 144 is a catalytic residue. Residue lysine 148 participates in substrate binding. Positions 150-155 are interaction with RNA; that stretch reads RHNKRR. Residues aspartate 180 and 217–220 each bind substrate; that span reads TKFE.

This sequence belongs to the class I-like SAM-binding methyltransferase superfamily. TrmB family. As to quaternary structure, monomer.

It catalyses the reaction guanosine(46) in tRNA + S-adenosyl-L-methionine = N(7)-methylguanosine(46) in tRNA + S-adenosyl-L-homocysteine. It functions in the pathway tRNA modification; N(7)-methylguanine-tRNA biosynthesis. Catalyzes the formation of N(7)-methylguanine at position 46 (m7G46) in tRNA. The sequence is that of tRNA (guanine-N(7)-)-methyltransferase from Shigella boydii serotype 4 (strain Sb227).